The chain runs to 118 residues: Small ribosomal subunit protein uS13 (118 aa).

Residues 94-118 are disordered; the sequence is SLPLRGQRTKTNARTRKGPRKPIKK.

This sequence belongs to the universal ribosomal protein uS13 family. Part of the 30S ribosomal subunit. Forms a loose heterodimer with protein S19. Forms two bridges to the 50S subunit in the 70S ribosome.

Its function is as follows. Located at the top of the head of the 30S subunit, it contacts several helices of the 16S rRNA. In the 70S ribosome it contacts the 23S rRNA (bridge B1a) and protein L5 of the 50S subunit (bridge B1b), connecting the 2 subunits; these bridges are implicated in subunit movement. Contacts the tRNAs in the A and P-sites. The sequence is that of Small ribosomal subunit protein uS13 from Alteromonas mediterranea (strain DSM 17117 / CIP 110805 / LMG 28347 / Deep ecotype).